We begin with the raw amino-acid sequence, 350 residues long: MSKIRVLCVDDSALMRQIMTEIINSHPDMEVVATAPDPLVARDLIKKFNPQVLTLDVEMPRMDGLDFLEKLMRLRPMPVVMVSSLTGKGSEITLRALELGAIDFVTKPQLGIREGMLAYSELIAEKIRMAAKARLPQRSTTAEPTKIIQHMPLLSSEKLIAIGASTGGTEAIRHVLQPLPPTSPALLITQHMPPGFTKSFAERLNKLCQITVKEAEDGERVLPGHAYIAPGARHLELARSGANYQVRLNDGPPVNRHRPSVDVLFRSVAQYAGRNAVGVILTGMGNDGAAGMLELHQAGAYTLAQNEASCVVFGMPREAIAMGGVDEVVDLHQVSQRMLAQISAGQALRI.

In terms of domain architecture, Response regulatory spans 5-122 (RVLCVDDSAL…REGMLAYSEL (118 aa)). A 4-aspartylphosphate modification is found at Asp-56. The 193-residue stretch at 153–345 (LLSSEKLIAI…QRMLAQISAG (193 aa)) folds into the CheB-type methylesterase domain. Residues Ser-165, His-191, and Asp-287 contribute to the active site.

The protein belongs to the CheB family. Post-translationally, phosphorylated by CheA. Phosphorylation of the N-terminal regulatory domain activates the methylesterase activity.

Its subcellular location is the cytoplasm. It carries out the reaction [protein]-L-glutamate 5-O-methyl ester + H2O = L-glutamyl-[protein] + methanol + H(+). It catalyses the reaction L-glutaminyl-[protein] + H2O = L-glutamyl-[protein] + NH4(+). Involved in chemotaxis. Part of a chemotaxis signal transduction system that modulates chemotaxis in response to various stimuli. Catalyzes the demethylation of specific methylglutamate residues introduced into the chemoreceptors (methyl-accepting chemotaxis proteins or MCP) by CheR. Also mediates the irreversible deamidation of specific glutamine residues to glutamic acid. Does not interact with the C-terminal pentapeptide of the chemoreceptors. The sequence is that of Protein-glutamate methylesterase/protein-glutamine glutaminase from Pectobacterium atrosepticum (strain SCRI 1043 / ATCC BAA-672) (Erwinia carotovora subsp. atroseptica).